Here is a 154-residue protein sequence, read N- to C-terminus: Protein X (154 aa).

The segment at 68–117 (PCALRFTSARRMETTVNAHQVLPKVLYKRTLGLSAMSTTDLEAYFKDCLF) is mitochondrial targeting sequence.

This sequence belongs to the orthohepadnavirus protein X family. As to quaternary structure, may form homodimer. May interact with host CEBPA, CFLAR, CREB1, DDB1, E4F1, HBXIP, HSPD1/HSP60, NFKBIA, POLR2E and SMAD4. Interacts with host SMC5-SMC6 complex and induces its degradation. Interacts with host TRPC4AP; leading to prevent ubiquitination of TRPC4AP. Interacts with host PLSCR1; this interaction promotes ubiquitination and degradation of HBx and impairs HBx-mediated cell proliferation. Post-translationally, a fraction may be phosphorylated in insect cells and HepG2 cells, a human hepatoblastoma cell line. Phosphorylated in vitro by host protein kinase C or mitogen-activated protein kinase. N-acetylated in insect cells.

The protein localises to the host cytoplasm. It is found in the host nucleus. The protein resides in the host mitochondrion. Its function is as follows. Multifunctional protein that plays a role in silencing host antiviral defenses and promoting viral transcription. Does not seem to be essential for HBV infection. May be directly involved in development of cirrhosis and liver cancer (hepatocellular carcinoma). Most of cytosolic activities involve modulation of cytosolic calcium. The effect on apoptosis is controversial depending on the cell types in which the studies have been conducted. May induce apoptosis by localizing in mitochondria and causing loss of mitochondrial membrane potential. May also modulate apoptosis by binding host CFLAR, a key regulator of the death-inducing signaling complex (DISC). Promotes viral transcription by using the host E3 ubiquitin ligase DDB1 to target the SMC5-SMC6 complex to proteasomal degradation. This host complex would otherwise bind to viral episomal DNA, and prevents its transcription. Moderately stimulates transcription of many different viral and cellular transcription elements. Promoters and enhancers stimulated by HBx contain DNA binding sites for NF-kappa-B, AP-1, AP-2, c-EBP, ATF/CREB, or the calcium-activated factor NF-AT. This Homo sapiens (Human) protein is Protein X.